A 480-amino-acid polypeptide reads, in one-letter code: Cysteine--tRNA ligase (480 aa).

Zn(2+) is bound at residue cysteine 29. The short motif at 31-41 is the 'HIGH' region element; the sequence is PTVYSDPHLGH. Residues cysteine 220, histidine 245, and glutamate 249 each coordinate Zn(2+). The 'KMSKS' region motif lies at 276–280; it reads KMAKS. Position 279 (lysine 279) interacts with ATP.

It belongs to the class-I aminoacyl-tRNA synthetase family. In terms of assembly, monomer. Zn(2+) is required as a cofactor.

The protein resides in the cytoplasm. It catalyses the reaction tRNA(Cys) + L-cysteine + ATP = L-cysteinyl-tRNA(Cys) + AMP + diphosphate. The polypeptide is Cysteine--tRNA ligase (Thermus thermophilus (strain ATCC BAA-163 / DSM 7039 / HB27)).